We begin with the raw amino-acid sequence, 188 residues long: Elongation factor P (188 aa).

The residue at position 34 (Lys34) is an N6-(3,6-diaminohexanoyl)-5-hydroxylysine.

This sequence belongs to the elongation factor P family. May be beta-lysylated on the epsilon-amino group of Lys-34 by the combined action of EpmA and EpmB, and then hydroxylated on the C5 position of the same residue by EpmC (if this protein is present). Lysylation is critical for the stimulatory effect of EF-P on peptide-bond formation. The lysylation moiety may extend toward the peptidyltransferase center and stabilize the terminal 3-CCA end of the tRNA. Hydroxylation of the C5 position on Lys-34 may allow additional potential stabilizing hydrogen-bond interactions with the P-tRNA.

The protein localises to the cytoplasm. It participates in protein biosynthesis; polypeptide chain elongation. Functionally, involved in peptide bond synthesis. Alleviates ribosome stalling that occurs when 3 or more consecutive Pro residues or the sequence PPG is present in a protein, possibly by augmenting the peptidyl transferase activity of the ribosome. Modification of Lys-34 is required for alleviation. The polypeptide is Elongation factor P (Coxiella burnetii (strain CbuG_Q212) (Coxiella burnetii (strain Q212))).